An 886-amino-acid polypeptide reads, in one-letter code: Adhesion G protein-coupled receptor E1 (886 aa).

Positions 1–20 (MRGFNLLLFWGCCVMHSWEG) are cleaved as a signal peptide. Residues 21 to 599 (HIRPTRKPNT…IMASGELTMD (579 aa)) are Extracellular-facing. In terms of domain architecture, EGF-like 1 spans 31-79 (KGNNCRDSTLCPAYATCTNTVDSYYCACKQGFLSSNGQNHFKDPGVRCK). Disulfide bonds link C35–C47, C41–C56, C58–C78, C84–C97, C91–C106, C108–C130, C136–C148, C142–C157, C159–C170, C176–C188, C182–C197, C199–C219, C225–C235, C229–C244, C246–C266, C272–C285, C279–C294, and C296–C315. One can recognise an EGF-like 2; calcium-binding domain in the interval 80 to 131 (DIDECSQSPQPCGPNSSCKNLSGRYKCSCLDGFSSPTGNDWVPGKPGNFSCT). N94, N99, and N127 each carry an N-linked (GlcNAc...) asparagine glycan. The EGF-like 3; calcium-binding domain occupies 132-171 (DINECLTSSVCPEHSDCVNSMGSYSCSCQVGFISRNSTCE). A glycan (N-linked (GlcNAc...) asparagine) is linked at N167. Residues 172–220 (DVDECADPRACPEHATCNNTVGNYSCFCNPGFESSSGHLSFQGLKASCE) enclose the EGF-like 4; calcium-binding domain. N-linked (GlcNAc...) asparagine glycosylation is found at N189 and N194. Residues 221–267 (DIDECTEMCPINSTCTNTPGSYFCTCHPGFAPSNGQLNFTDQGVECR) form the EGF-like 5; calcium-binding domain. N-linked (GlcNAc...) asparagine glycosylation is found at N232 and N258. The region spanning 268-316 (DIDECRQDPSTCGPNSICTNALGSYSCGCIAGFHPNPEGSQKDGNFSCQ) is the EGF-like 6; calcium-binding domain. 4 N-linked (GlcNAc...) asparagine glycosylation sites follow: N312, N366, N375, and N448. The region spanning 431-597 (EYLDIESKVI…AVIMASGELT (167 aa)) is the GAIN-B domain. 2 disulfides stabilise this stretch: C550–C579 and C567–C581. The tract at residues 550–597 (CVSWSTDVKGGRWTSFGCVILEASETYTICSCNQMANLAVIMASGELT) is GPS. A helical transmembrane segment spans residues 600-627 (FSLYIISHVGIIISLVCLVLAIATFLLC). The Cytoplasmic segment spans residues 628–634 (RSIRNHN). Residues 635 to 656 (TYLHLHLCVCLLLAKTLFLAGI) traverse the membrane as a helical segment. Topologically, residues 657-666 (HKTDNKMGCA) are extracellular. A helical transmembrane segment spans residues 667 to 690 (IIAGFLHYLFLACFFWMLVEAVIL). The Cytoplasmic portion of the chain corresponds to 691–709 (FLMVRNLKVVNYFSSRNIK). Residues 710 to 731 (MLHICAFGYGLPMLVVVISASV) form a helical membrane-spanning segment. Residues 732–747 (QPQGYGMHNRCWLNTE) are Extracellular-facing. The helical transmembrane segment at 748-776 (TGFIWSFLGPVCTVIVINSLLLTWTLWIL) threads the bilayer. Residues 777–794 (RQRLSSVNAEVSTLKDTR) lie on the Cytoplasmic side of the membrane. Residues 795 to 814 (LLTFKAFAQLFILGCSWVLG) form a helical membrane-spanning segment. The Extracellular portion of the chain corresponds to 815–829 (IFQIGPVAGVMAYLF). Residues 830–852 (TIINSLQGAFIFLIHCLLNGQVR) traverse the membrane as a helical segment. The Cytoplasmic portion of the chain corresponds to 853–886 (EEYKRWITGKTKPSSQSQTSRILLSSMPSASKTG). The segment at 862-886 (KTKPSSQSQTSRILLSSMPSASKTG) is disordered. The span at 863–886 (TKPSSQSQTSRILLSSMPSASKTG) shows a compositional bias: polar residues.

This sequence belongs to the G-protein coupled receptor 2 family. Adhesion G-protein coupled receptor (ADGR) subfamily. As to expression, expression is restricted to eosinophils.

Its subcellular location is the cell membrane. In terms of biological role, orphan receptor involved in cell adhesion and probably in cell-cell interactions specifically involving cells of the immune system. May play a role in regulatory T-cells (Treg) development. In Homo sapiens (Human), this protein is Adhesion G protein-coupled receptor E1.